A 168-amino-acid chain; its full sequence is DAZ-associated protein 2 (168 aa).

Positions 1–13 (MNSKGQYPTQPTY) are enriched in low complexity. The tract at residues 1-25 (MNSKGQYPTQPTYPVQPPGNPVYPQ) is disordered. The PPAY motif lies at 39–42 (PPAY). A Phosphoserine modification is found at serine 77.

In terms of assembly, interacts with SOX6. Interacts with DAZ1 and DAZL. Interacts with IL17RB. May interact with FAM168B. Interacts with INCA1. Interacts with EIF4G1 and EIF4G2. Interacts (via PPAY motif) with NEDD4 (via WW domains). Interacts with transcription factor TCF4; the interaction results in localization of DAZAP2 to the nucleus. Interacts with transcription factors TCF7 and TCF7L1. Interacts with transcription factor LEF1. Interacts with serine/threonine-protein kinase HIPK2; the interaction results in phosphorylation of DAZAP2 which causes localization of DAZAP2 to the nucleus, reduces interaction of DAZAP2 with HIPK2 and prevents DAZAP2-dependent degradation of HIPK2. Interacts with ubiquitin ligase SIAH1; the interaction is decreased following phosphorylation of DAZAP2 by HIPK2. Interacts with TP53; the interaction is triggered by DNA damage. Ubiquitinated by SMURF2, leading to proteasomal degradation. Ubiquitinated by NEDD4, leading to proteasomal degradation. Post-translationally, following DNA damage, phosphorylated by HIPK2 which promotes DAZAP2 localization to the nucleus, reduces interaction of DAZAP2 with HIPK2 and SIAH1, and prevents DAZAP2-dependent ubiquitination of HIPK2 by E3 ubiquitin-protein ligase SIAH1 and subsequent HIPK2 proteasomal degradation.

It is found in the cytoplasm. The protein resides in the nucleus. Its subcellular location is the nucleus speckle. It localises to the nuclear body. The protein localises to the stress granule. Functionally, in unstressed cells, promotes SIAH1-mediated polyubiquitination and degradation of the serine/threonine-protein kinase HIPK2, probably by acting as a loading factor that potentiates complex formation between HIPK2 and ubiquitin ligase SIAH1. In response to DNA damage, localizes to the nucleus following phosphorylation by HIPK2 and modulates the expression of a subset of TP53/p53 target genes by binding to TP53 at target gene promoters. This limits the expression of a number of cell death-mediating TP53 target genes, reducing DNA damage-induced cell death. Enhances the binding of transcription factor TCF7L2/TCF4, a Wnt signaling pathway effector, to the promoters of target genes. Plays a role in stress granule formation. This chain is DAZ-associated protein 2, found in Rattus norvegicus (Rat).